Here is a 294-residue protein sequence, read N- to C-terminus: Release factor glutamine methyltransferase (294 aa).

Residues 131–135, aspartate 154, and asparagine 202 each bind S-adenosyl-L-methionine; that span reads GTGSG. 202–205 lines the substrate pocket; it reads NPPY.

It belongs to the protein N5-glutamine methyltransferase family. PrmC subfamily.

The catalysed reaction is L-glutaminyl-[peptide chain release factor] + S-adenosyl-L-methionine = N(5)-methyl-L-glutaminyl-[peptide chain release factor] + S-adenosyl-L-homocysteine + H(+). In terms of biological role, methylates the class 1 translation termination release factors RF1/PrfA and RF2/PrfB on the glutamine residue of the universally conserved GGQ motif. The protein is Release factor glutamine methyltransferase of Chlorobaculum tepidum (strain ATCC 49652 / DSM 12025 / NBRC 103806 / TLS) (Chlorobium tepidum).